Here is a 150-residue protein sequence, read N- to C-terminus: Aspartate carbamoyltransferase regulatory chain (150 aa).

Zn(2+)-binding residues include cysteine 105, cysteine 110, cysteine 133, and cysteine 136.

Belongs to the PyrI family. In terms of assembly, contains catalytic and regulatory chains. Zn(2+) serves as cofactor.

In terms of biological role, involved in allosteric regulation of aspartate carbamoyltransferase. This Thermococcus sibiricus (strain DSM 12597 / MM 739) protein is Aspartate carbamoyltransferase regulatory chain.